The chain runs to 341 residues: Protein huluwa (341 aa).

Over 1 to 36 (MVTLSPAYLPSDGGTQAASAAPSVEENWVVQPSLTL) the chain is Extracellular. A helical transmembrane segment spans residues 37-57 (LVLLLVPCVLLLFFLNCFLLF). Topologically, residues 58 to 341 (HRLPAFSLRK…PMMCSKQYWI (284 aa)) are cytoplasmic. The VPPNSP motif motif lies at 206–211 (VPPNTP).

It belongs to the huluwa family. Interacts with axin1; leading to promote the tankyrase-mediated degradation of axin. Interacts with axin2; leading to promote the tankyrase-mediated degradation of axin.

It localises to the cell membrane. Key maternal determinant of the dorsal organizer and body axis formation in vertebrates that acts by promoting stabilization of beta-catenin (ctnnb1). Localizes on the plasma membrane of the future dorsal blastomeres in early blastulas and binds to and promotes the tankyrase-mediated degradation of axin (axin1 and axin2). Axin degradation results in stabilization and nuclear translocation of beta-catenin (ctnnb1) for activating organizer-specific target gene expression. The sequence is that of Protein huluwa from Xenopus laevis (African clawed frog).